The sequence spans 199 residues: NAD(P)H dehydrogenase (quinone) (199 aa).

The region spanning 4 to 190 (VLVLYYSAYG…AGARYQGRVI (187 aa)) is the Flavodoxin-like domain. Residues 10 to 15 (SAYGHI) and 78 to 80 (TRF) contribute to the FMN site. An NAD(+)-binding site is contributed by Tyr12. Residue Trp98 coordinates substrate. FMN is bound by residues 113–119 (STATQHG) and His134.

It belongs to the WrbA family. FMN is required as a cofactor.

It catalyses the reaction a quinone + NADH + H(+) = a quinol + NAD(+). The enzyme catalyses a quinone + NADPH + H(+) = a quinol + NADP(+). The chain is NAD(P)H dehydrogenase (quinone) from Bradyrhizobium sp. (strain ORS 278).